A 262-amino-acid polypeptide reads, in one-letter code: tRNA pseudouridine synthase A (262 aa).

Asp51 functions as the Nucleophile in the catalytic mechanism. Substrate is bound at residue Tyr109.

The protein belongs to the tRNA pseudouridine synthase TruA family. In terms of assembly, homodimer.

The enzyme catalyses uridine(38/39/40) in tRNA = pseudouridine(38/39/40) in tRNA. Functionally, formation of pseudouridine at positions 38, 39 and 40 in the anticodon stem and loop of transfer RNAs. The sequence is that of tRNA pseudouridine synthase A from Actinobacillus pleuropneumoniae serotype 7 (strain AP76).